Consider the following 175-residue polypeptide: Adenine phosphoribosyltransferase (175 aa).

This sequence belongs to the purine/pyrimidine phosphoribosyltransferase family. As to quaternary structure, homodimer.

It localises to the cytoplasm. It carries out the reaction AMP + diphosphate = 5-phospho-alpha-D-ribose 1-diphosphate + adenine. The protein operates within purine metabolism; AMP biosynthesis via salvage pathway; AMP from adenine: step 1/1. Catalyzes a salvage reaction resulting in the formation of AMP, that is energically less costly than de novo synthesis. This Lacticaseibacillus paracasei (strain ATCC 334 / BCRC 17002 / CCUG 31169 / CIP 107868 / KCTC 3260 / NRRL B-441) (Lactobacillus paracasei) protein is Adenine phosphoribosyltransferase.